Here is a 116-residue protein sequence, read N- to C-terminus: Classical arabinogalactan protein 25 (116 aa).

A signal peptide spans 1-28; it reads MAFSFLNKLLIIFIFIFISLSSSSPTIS. Positions 40–95 are disordered; that stretch reads LLPSPGDALPSDDGSGTIPSSPSPPDPDTNDGSYPDPLAFSPFASPPVSSPSPPPS. Composition is skewed to low complexity over residues 50-59 and 69-82; these read SDDGSGTIPS and NDGSYPDPLAFSPF. Residues 83–95 are compositionally biased toward pro residues; that stretch reads ASPPVSSPSPPPS. A lipid anchor (GPI-anchor amidated serine) is attached at Ser-89. Residues 90-116 constitute a propeptide, removed in mature form; the sequence is PSPPPSLPSAGVLLISLIISSASFLAL.

This sequence belongs to the classical AGP family. Post-translationally, O-glycosylated on the hydroxyproline residues.

The protein resides in the cell membrane. Functionally, proteoglycan that seems to be implicated in diverse developmental roles such as differentiation, cell-cell recognition, embryogenesis and programmed cell death. This Arabidopsis thaliana (Mouse-ear cress) protein is Classical arabinogalactan protein 25 (AGP25).